The following is a 309-amino-acid chain: Epidermal retinol dehydrogenase 2 (309 aa).

A helical membrane pass occupies residues 11–31 (LFIFLGKSLFSLLEAMIFALL). 44–68 (LITGAGSGLGRLLALQFARLGSVLV) is an NADP(+) binding site. A substrate-binding site is contributed by S177. Y190 serves as the catalytic Proton acceptor. A helical transmembrane segment spans residues 270–290 (LLYFMMFLKSFLPLKTGLLIA).

The protein belongs to the short-chain dehydrogenases/reductases (SDR) family. As to expression, detected in adult lung. Detected at low levels in adult brain, heart, testis, placenta, cervix, pancreas, uterus, stomach, rectum, small intestine, colon, esophagus, thymus, skin, and skin keratinocyte. Expression is higher in psoriasis lesions relative to unaffected skin from psoriasis patients. Detected in fetal kidney, skin and lung.

The protein resides in the endoplasmic reticulum membrane. The catalysed reaction is all-trans-retinol--[retinol-binding protein] + NAD(+) = all-trans-retinal--[retinol-binding protein] + NADH + H(+). The protein operates within cofactor metabolism; retinol metabolism. Its function is as follows. Oxidoreductase with strong preference for NAD. Active in both the oxidative and reductive directions. Oxidizes all-trans-retinol in all-trans-retinaldehyde. No activity was detected with 11-cis-retinol or 11-cis-retinaldehyde as substrates with either NAD(+)/NADH or NADP(+)/NADPH. This Homo sapiens (Human) protein is Epidermal retinol dehydrogenase 2.